Consider the following 298-residue polypeptide: MRIAILSQGPQLYSTKRLVEAALARGHEVKVINPLKCYMNINMTKPSIHMAGKDLGHFDAVIPRIGASVTFYGSAVLRQFEMMGVYAVNGSIGIARSRDKLRSMQLLSRQGIGLPITGFANKPSDIPDLIDMVGGAPLVVKLLEGTQGIGVVLAETRKAAESVLEAFMGLKANIMVQEYIAEAQGADIRCFVLGDKVIAAMKRQAKPGEFRSNLHRGGSATLVKLTPEERSVALRAAKTMGLNIAGVDLLRSNHGPVVMEVNSSPGLEGIEKATQKDVADAIICFMEKNANKSIKSAQ.

An ATP-grasp domain is found at methionine 104–glutamate 287. ATP-binding positions include lysine 141, glutamate 178–tyrosine 179, aspartate 187, and arginine 211–asparagine 213. Residues aspartate 248, glutamate 260, and asparagine 262 each coordinate Mg(2+). Residues aspartate 248, glutamate 260, and asparagine 262 each coordinate Mn(2+).

The protein belongs to the RimK family. Mg(2+) serves as cofactor. Mn(2+) is required as a cofactor.

In Shewanella frigidimarina (strain NCIMB 400), this protein is Probable alpha-L-glutamate ligase 2.